A 289-amino-acid polypeptide reads, in one-letter code: NAD kinase (289 aa).

Aspartate 63 acts as the Proton acceptor in catalysis. Residues 63-64, arginine 68, 138-139, arginine 149, aspartate 168, 179-184, and glutamine 238 contribute to the NAD(+) site; these read DG, ND, and TGYSLS.

It belongs to the NAD kinase family. It depends on a divalent metal cation as a cofactor.

Its subcellular location is the cytoplasm. The enzyme catalyses NAD(+) + ATP = ADP + NADP(+) + H(+). Its function is as follows. Involved in the regulation of the intracellular balance of NAD and NADP, and is a key enzyme in the biosynthesis of NADP. Catalyzes specifically the phosphorylation on 2'-hydroxyl of the adenosine moiety of NAD to yield NADP. The protein is NAD kinase of Gemmatimonas aurantiaca (strain DSM 14586 / JCM 11422 / NBRC 100505 / T-27).